The sequence spans 167 residues: CGG triplet repeat-binding protein 1 (167 aa).

The residue at position 56 (Ser-56) is a Phosphoserine. The Nuclear localization signal signature appears at 80-84; that stretch reads RKKQR. Ser-164 carries the post-translational modification Phosphoserine.

Ubiquitous. Highly expressed in placenta, thymus, lymph nodes, cerebellum and cerebral cortex. Low expression in other regions of the brain.

The protein localises to the nucleus. Its function is as follows. Binds to nonmethylated 5'-d(CGG)(n)-3' trinucleotide repeats in the FMR1 promoter. May play a role in regulating FMR1 promoter. This is CGG triplet repeat-binding protein 1 (CGGBP1) from Homo sapiens (Human).